Here is a 365-residue protein sequence, read N- to C-terminus: MNLAAMDPTTYDAQLTAKRIKLEQAFAQFETPSVEVFASEPAHYRMRAEFRVWHEGDDLYYYMFDKVLNDKVRCDQYLPASALINQMMAALITELKPNHSLRHKLFQVDFLSTLSGEILVSLLYHRQLDDQWRSEAAALKARLSSQFKVNIIGRARKQKIDLDKDFVVESLQVNDKVFHYKQIENSFTQPNAKVAIKMLEWAIDVTQNSQGDLLELYCGNGNFSIALAQNFNRVLATELAKPSVDAAQYNIEVNNIDNLQIIRMSAEEFSDAMAKKRSFRRLEGIDLDSYVCNTIFVDPPRAGIDPATLELVRGYERILYISCNPDTLKDNLQQLNQTHKVTRFALFDQFPYTDHMETGVLLERR.

Gln-189, Tyr-217, Asn-222, Glu-238, and Asp-298 together coordinate S-adenosyl-L-methionine. The Nucleophile role is filled by Cys-323. The active-site Proton acceptor is Glu-357.

This sequence belongs to the class I-like SAM-binding methyltransferase superfamily. RNA M5U methyltransferase family. TrmA subfamily.

It catalyses the reaction uridine(54) in tRNA + S-adenosyl-L-methionine = 5-methyluridine(54) in tRNA + S-adenosyl-L-homocysteine + H(+). The enzyme catalyses uridine(341) in tmRNA + S-adenosyl-L-methionine = 5-methyluridine(341) in tmRNA + S-adenosyl-L-homocysteine + H(+). Its function is as follows. Dual-specificity methyltransferase that catalyzes the formation of 5-methyluridine at position 54 (m5U54) in all tRNAs, and that of position 341 (m5U341) in tmRNA (transfer-mRNA). The chain is tRNA/tmRNA (uracil-C(5))-methyltransferase from Shewanella sp. (strain ANA-3).